We begin with the raw amino-acid sequence, 195 residues long: MIKGVEGEITEISGNEVTLKAGQFYLNILCSTNTIKELSLSAKVHLLTYLSFSADRAPEIYGFKDRAEYNVFLMLLKANKIGPKMALKILSATSPEMLQKMIASKDISGLSRLPGLGKKTAERLVSELYDLVKDYAVEFPKELSDVSEDAVGALTALGFDMTSAKLAVNEVLKEQTVENTQELVRKALRKLNKTR.

The interval 1–64 (MIKGVEGEIT…DRAPEIYGFK (64 aa)) is domain I. The domain II stretch occupies residues 65–137 (DRAEYNVFLM…LYDLVKDYAV (73 aa)). The tract at residues 137-141 (VEFPK) is flexible linker. The tract at residues 142 to 195 (ELSDVSEDAVGALTALGFDMTSAKLAVNEVLKEQTVENTQELVRKALRKLNKTR) is domain III.

It belongs to the RuvA family. As to quaternary structure, homotetramer. Forms an RuvA(8)-RuvB(12)-Holliday junction (HJ) complex. HJ DNA is sandwiched between 2 RuvA tetramers; dsDNA enters through RuvA and exits via RuvB. An RuvB hexamer assembles on each DNA strand where it exits the tetramer. Each RuvB hexamer is contacted by two RuvA subunits (via domain III) on 2 adjacent RuvB subunits; this complex drives branch migration. In the full resolvosome a probable DNA-RuvA(4)-RuvB(12)-RuvC(2) complex forms which resolves the HJ.

It is found in the cytoplasm. In terms of biological role, the RuvA-RuvB-RuvC complex processes Holliday junction (HJ) DNA during genetic recombination and DNA repair, while the RuvA-RuvB complex plays an important role in the rescue of blocked DNA replication forks via replication fork reversal (RFR). RuvA specifically binds to HJ cruciform DNA, conferring on it an open structure. The RuvB hexamer acts as an ATP-dependent pump, pulling dsDNA into and through the RuvAB complex. HJ branch migration allows RuvC to scan DNA until it finds its consensus sequence, where it cleaves and resolves the cruciform DNA. The polypeptide is Holliday junction branch migration complex subunit RuvA (Kosmotoga olearia (strain ATCC BAA-1733 / DSM 21960 / TBF 19.5.1)).